A 365-amino-acid polypeptide reads, in one-letter code: Patr class I histocompatibility antigen, A-108 alpha chain (365 aa).

The N-terminal stretch at 1–24 (MAVMPPRTLLLLLSGALALTQTWA) is a signal peptide. Positions 25–114 (GSHSMRYFYT…LRGYYNQSED (90 aa)) are alpha-1. The Extracellular segment spans residues 25-308 (GSHSMRYFYT…EPSSQPTIPI (284 aa)). N-linked (GlcNAc...) asparagine glycosylation is present at Asn110. Residues 115–206 (GSHTIQIMYG…ENGKETLQRT (92 aa)) are alpha-2. Cystine bridges form between Cys125–Cys188 and Cys227–Cys283. The alpha-3 stretch occupies residues 207-298 (DPPKTHMTHH…GLPKPLTLRW (92 aa)). The region spanning 209–295 (PKTHMTHHPI…QHEGLPKPLT (87 aa)) is the Ig-like C1-type domain. Positions 299 to 308 (EPSSQPTIPI) are connecting peptide. A helical membrane pass occupies residues 309-332 (VGIIAGLVLLGAVITGAVVAAVMW). At 333–365 (RRKSSDRKGGSYTQAASSDSAQGSDVSLTACKV) the chain is on the cytoplasmic side. The disordered stretch occupies residues 339–360 (RKGGSYTQAASSDSAQGSDVSL). A Phosphoserine modification is found at Ser343. At Tyr344 the chain carries Phosphotyrosine. Low complexity predominate over residues 346–359 (QAASSDSAQGSDVS). Ser349, Ser350, Ser352, Ser356, and Ser359 each carry phosphoserine.

The protein belongs to the MHC class I family. As to quaternary structure, heterodimer of an alpha chain and a beta chain (beta-2-microglobulin).

It localises to the membrane. Involved in the presentation of foreign antigens to the immune system. The sequence is that of Patr class I histocompatibility antigen, A-108 alpha chain (Patr-A) from Pan troglodytes (Chimpanzee).